The sequence spans 156 residues: ATP synthase subunit b (156 aa).

Residues 12 to 32 (IAFAIFVLFCMKFIWPALMGA) form a helical membrane-spanning segment.

Belongs to the ATPase B chain family. As to quaternary structure, F-type ATPases have 2 components, F(1) - the catalytic core - and F(0) - the membrane proton channel. F(1) has five subunits: alpha(3), beta(3), gamma(1), delta(1), epsilon(1). F(0) has three main subunits: a(1), b(2) and c(10-14). The alpha and beta chains form an alternating ring which encloses part of the gamma chain. F(1) is attached to F(0) by a central stalk formed by the gamma and epsilon chains, while a peripheral stalk is formed by the delta and b chains.

The protein localises to the cell inner membrane. In terms of biological role, f(1)F(0) ATP synthase produces ATP from ADP in the presence of a proton or sodium gradient. F-type ATPases consist of two structural domains, F(1) containing the extramembraneous catalytic core and F(0) containing the membrane proton channel, linked together by a central stalk and a peripheral stalk. During catalysis, ATP synthesis in the catalytic domain of F(1) is coupled via a rotary mechanism of the central stalk subunits to proton translocation. Functionally, component of the F(0) channel, it forms part of the peripheral stalk, linking F(1) to F(0). This Psychrobacter sp. (strain PRwf-1) protein is ATP synthase subunit b.